Reading from the N-terminus, the 95-residue chain is Co-chaperonin GroES (95 aa).

It belongs to the GroES chaperonin family. As to quaternary structure, heptamer of 7 subunits arranged in a ring. Interacts with the chaperonin GroEL.

It localises to the cytoplasm. In terms of biological role, together with the chaperonin GroEL, plays an essential role in assisting protein folding. The GroEL-GroES system forms a nano-cage that allows encapsulation of the non-native substrate proteins and provides a physical environment optimized to promote and accelerate protein folding. GroES binds to the apical surface of the GroEL ring, thereby capping the opening of the GroEL channel. This is Co-chaperonin GroES from Geobacter sulfurreducens (strain ATCC 51573 / DSM 12127 / PCA).